We begin with the raw amino-acid sequence, 488 residues long: Kelch-like protein 15 (488 aa).

The BTB domain occupies 31–98 (LDVTLVIEDH…MYYGTIELSM (68 aa)). Positions 133 to 237 (CAEIMRLLDD…TPSSVFEKVK (105 aa)) constitute a BACK domain. Kelch repeat units follow at residues 328-379 (FVFL…VIGR), 381-426 (VYAV…VLGN), and 428-473 (LYIT…NKCK).

Homodimer. Interacts with CUL3.

The protein localises to the nucleus. It functions in the pathway protein modification; protein ubiquitination. In terms of biological role, substrate-specific adapter for CUL3 E3 ubiquitin-protein ligase complex. This Gallus gallus (Chicken) protein is Kelch-like protein 15 (KLHL15).